A 331-amino-acid polypeptide reads, in one-letter code: XylDLEGF operon transcriptional activator 3 (331 aa).

Residues 214–315 (ERVVQFIEDN…GELPSDTLRR (102 aa)) form the HTH araC/xylS-type domain. DNA-binding regions (H-T-H motif) lie at residues 231 to 252 (ERLA…EKHA) and 282 to 305 (VTEM…RSTF).

It localises to the cytoplasm. Its function is as follows. Regulatory protein of the TOL plasmid xyl operons. XylS activates the xylXYZLTEGFJQKIH operon required for the degradation of toluene, m-xylene and p-xylene. The polypeptide is XylDLEGF operon transcriptional activator 3 (xylS3) (Pseudomonas putida (Arthrobacter siderocapsulatus)).